A 198-amino-acid chain; its full sequence is Protein GrpE (198 aa).

The disordered stretch occupies residues 1-56; sequence MVEKKKSQAEKNNQSATEEEIEKAVKGSKRDSNAADEKNSASAAASSSAVSDAEPA. The segment covering 22–39 has biased composition (basic and acidic residues); sequence EKAVKGSKRDSNAADEKN. Residues 40-56 show a composition bias toward low complexity; the sequence is SASAAASSSAVSDAEPA.

This sequence belongs to the GrpE family. As to quaternary structure, homodimer.

The protein resides in the cytoplasm. Its function is as follows. Participates actively in the response to hyperosmotic and heat shock by preventing the aggregation of stress-denatured proteins, in association with DnaK and GrpE. It is the nucleotide exchange factor for DnaK and may function as a thermosensor. Unfolded proteins bind initially to DnaJ; upon interaction with the DnaJ-bound protein, DnaK hydrolyzes its bound ATP, resulting in the formation of a stable complex. GrpE releases ADP from DnaK; ATP binding to DnaK triggers the release of the substrate protein, thus completing the reaction cycle. Several rounds of ATP-dependent interactions between DnaJ, DnaK and GrpE are required for fully efficient folding. The protein is Protein GrpE of Oenococcus oeni (strain ATCC BAA-331 / PSU-1).